We begin with the raw amino-acid sequence, 26 residues long: Delta-hemolysin (26 aa).

M1 is subject to N-formylmethionine.

It belongs to the delta-lysin family.

Its subcellular location is the secreted. The protein resides in the host cell membrane. Functionally, lyses erythrocytes and many other mammalian cells. The sequence is that of Delta-hemolysin (hld) from Staphylococcus aureus (strain Mu50 / ATCC 700699).